The chain runs to 334 residues: Trans-1,2-dihydrobenzene-1,2-diol dehydrogenase (334 aa).

Belongs to the Gfo/Idh/MocA family. Homodimer. Small intestine.

It carries out the reaction (1R,2R)-1,2-dihydrobenzene-1,2-diol + NADP(+) = catechol + NADPH + H(+). The enzyme catalyses D-xylose + NADP(+) = D-xylono-1,5-lactone + NADPH + H(+). The protein is Trans-1,2-dihydrobenzene-1,2-diol dehydrogenase (DHDH) of Homo sapiens (Human).